A 201-amino-acid polypeptide reads, in one-letter code: Large ribosomal subunit protein uL4 (201 aa).

The disordered stretch occupies residues arginine 44–alanine 68.

This sequence belongs to the universal ribosomal protein uL4 family. As to quaternary structure, part of the 50S ribosomal subunit.

One of the primary rRNA binding proteins, this protein initially binds near the 5'-end of the 23S rRNA. It is important during the early stages of 50S assembly. It makes multiple contacts with different domains of the 23S rRNA in the assembled 50S subunit and ribosome. In terms of biological role, forms part of the polypeptide exit tunnel. The polypeptide is Large ribosomal subunit protein uL4 (Buchnera aphidicola subsp. Acyrthosiphon pisum (strain APS) (Acyrthosiphon pisum symbiotic bacterium)).